We begin with the raw amino-acid sequence, 429 residues long: Small ribosomal subunit protein bS1 (429 aa).

4 consecutive S1 motif domains span residues 55-128, 144-211, 231-299, and 316-385; these read GDVV…LSKK, GDTV…SRKA, GEVV…LSIK, and GSVL…LSMK. Basic and acidic residues predominate over residues 382–399; sequence LSMKALEEKPEREDRRGN. The tract at residues 382 to 412 is disordered; sequence LSMKALEEKPEREDRRGNDGSASRADIAAYK.

The protein belongs to the bacterial ribosomal protein bS1 family.

Functionally, binds mRNA; thus facilitating recognition of the initiation point. It is needed to translate mRNA with a short Shine-Dalgarno (SD) purine-rich sequence. The protein is Small ribosomal subunit protein bS1 (rps1) of Leuconostoc lactis.